The chain runs to 114 residues: Cytochrome c2 (114 aa).

Gln-1 carries the pyrrolidone carboxylic acid modification. Residues Cys-13, Cys-16, His-17, and Met-93 each contribute to the heme c site.

The protein belongs to the cytochrome c family. Post-translationally, binds 1 heme c group covalently per subunit.

Its subcellular location is the periplasm. Cytochrome c2 is found mainly in purple, non-sulfur, photosynthetic bacteria where it functions as the electron donor to the oxidized bacteriochlorophyll in the photophosphorylation pathway. However, it may also have a role in the respiratory chain and is found in some non-photosynthetic bacteria. In Rhodopseudomonas palustris, this protein is Cytochrome c2.